A 122-amino-acid chain; its full sequence is 5'-AMP-activated protein kinase subunit beta-1 (122 aa).

Residues Ser5, Ser61, Ser66, and Ser73 each carry the phosphoserine modification. The glycogen-binding domain stretch occupies residues 33–122; that stretch reads EVNDKASAQA…TVNNIIQVKK (90 aa). Thr113 carries the post-translational modification Phosphothreonine.

It belongs to the 5'-AMP-activated protein kinase beta subunit family. As to quaternary structure, AMPK is a heterotrimer of an alpha catalytic subunit (PRKAA1 or PRKAA2), a beta (PRKAB1 or PRKAB2) and a gamma non-catalytic subunits (PRKAG1, PRKAG2 or PRKAG3). Interacts with FNIP1 and FNIP2. In terms of processing, phosphorylated when associated with the catalytic subunit (PRKAA1 or PRKAA2). Phosphorylated by ULK1; leading to negatively regulate AMPK activity and suggesting the existence of a regulatory feedback loop between ULK1 and AMPK.

Non-catalytic subunit of AMP-activated protein kinase (AMPK), an energy sensor protein kinase that plays a key role in regulating cellular energy metabolism. In response to reduction of intracellular ATP levels, AMPK activates energy-producing pathways and inhibits energy-consuming processes: inhibits protein, carbohydrate and lipid biosynthesis, as well as cell growth and proliferation. AMPK acts via direct phosphorylation of metabolic enzymes, and by longer-term effects via phosphorylation of transcription regulators. Also acts as a regulator of cellular polarity by remodeling the actin cytoskeleton; probably by indirectly activating myosin. Beta non-catalytic subunit acts as a scaffold on which the AMPK complex assembles, via its C-terminus that bridges alpha (PRKAA1 or PRKAA2) and gamma subunits (PRKAG1, PRKAG2 or PRKAG3). The sequence is that of 5'-AMP-activated protein kinase subunit beta-1 (PRKAB1) from Sus scrofa (Pig).